A 428-amino-acid chain; its full sequence is MSRNQQLFEQSQTLIPGGVNSPVRAFGSVGGTPVFFKRGLGARLWDEDGKEYIDYVGSWGPMILGHAQPDVIAAVQATAANSLSFGAPTALELEMAQLITQLVPSMEQVRLVSSGTEATMSAIRLARGFTSRSKILKFEGCYHGHADSLLVKAGSGALTFGQPSSAGVPPELAAHTLTLPYNDVQALEHLFEELGKEIACVILEPVAGNMNLVRPTPEFLGALRSLCTHSGTLLIFDEVMTGFRVALGGAQQLFGIKPDLTTLGKVIGGGLPVGAFGGRADVMAFLAPLGPVYQAGTLSGNPVAVAAGLATLKQLQRPGFHEELALKTRQLTDGLARAARDAGVTFSAQSVGGMFGLYFSAECPASFAEVMQSDKQAFNRFFHGMLEAGVYLAPSAFEAGFVSIAHSEADISQTIVSAQGVFSRINDQ.

Lys265 bears the N6-(pyridoxal phosphate)lysine mark.

This sequence belongs to the class-III pyridoxal-phosphate-dependent aminotransferase family. HemL subfamily. In terms of assembly, homodimer. Pyridoxal 5'-phosphate is required as a cofactor.

Its subcellular location is the cytoplasm. The catalysed reaction is (S)-4-amino-5-oxopentanoate = 5-aminolevulinate. Its pathway is porphyrin-containing compound metabolism; protoporphyrin-IX biosynthesis; 5-aminolevulinate from L-glutamyl-tRNA(Glu): step 2/2. In Methylobacillus flagellatus (strain ATCC 51484 / DSM 6875 / VKM B-1610 / KT), this protein is Glutamate-1-semialdehyde 2,1-aminomutase.